Reading from the N-terminus, the 488-residue chain is Arginine biosynthesis bifunctional protein ArgJ, mitochondrial (488 aa).

The substrate site is built by Thr-227, Lys-250, Thr-261, Glu-340, Asn-483, and Ser-488. Thr-261 (nucleophile) is an active-site residue.

The protein belongs to the ArgJ family. Heterodimer of an alpha and a beta chain. The alpha and beta chains are autoproteolytically processed from a single precursor protein within the mitochondrion.

The protein localises to the mitochondrion matrix. The catalysed reaction is N(2)-acetyl-L-ornithine + L-glutamate = N-acetyl-L-glutamate + L-ornithine. It carries out the reaction L-glutamate + acetyl-CoA = N-acetyl-L-glutamate + CoA + H(+). It participates in amino-acid biosynthesis; L-arginine biosynthesis; L-ornithine and N-acetyl-L-glutamate from L-glutamate and N(2)-acetyl-L-ornithine (cyclic): step 1/1. It functions in the pathway amino-acid biosynthesis; L-arginine biosynthesis; N(2)-acetyl-L-ornithine from L-glutamate: step 1/4. Its function is as follows. Catalyzes two activities which are involved in the cyclic version of arginine biosynthesis: the synthesis of acetylglutamate from glutamate and acetyl-CoA, and of ornithine by transacetylation between acetylornithine and glutamate. This chain is Arginine biosynthesis bifunctional protein ArgJ, mitochondrial, found in Thalassiosira pseudonana (Marine diatom).